Reading from the N-terminus, the 423-residue chain is Adenosylmethionine-8-amino-7-oxononanoate aminotransferase (423 aa).

W51 is a binding site for substrate. Residue 111–112 (GS) coordinates pyridoxal 5'-phosphate. A substrate-binding site is contributed by Y144. D243 is a pyridoxal 5'-phosphate binding site. Residues K272 and G306 each coordinate substrate. Residue K272 is modified to N6-(pyridoxal phosphate)lysine. 307–308 (PT) lines the pyridoxal 5'-phosphate pocket. Substrate is bound at residue R390.

This sequence belongs to the class-III pyridoxal-phosphate-dependent aminotransferase family. BioA subfamily. As to quaternary structure, homodimer. Requires pyridoxal 5'-phosphate as cofactor.

The protein localises to the cytoplasm. It carries out the reaction (8S)-8-amino-7-oxononanoate + S-adenosyl-L-methionine = S-adenosyl-4-methylsulfanyl-2-oxobutanoate + (7R,8S)-7,8-diammoniononanoate. It functions in the pathway cofactor biosynthesis; biotin biosynthesis; 7,8-diaminononanoate from 8-amino-7-oxononanoate (SAM route): step 1/1. In terms of biological role, catalyzes the transfer of the alpha-amino group from S-adenosyl-L-methionine (SAM) to 7-keto-8-aminopelargonic acid (KAPA) to form 7,8-diaminopelargonic acid (DAPA). It is the only aminotransferase known to utilize SAM as an amino donor. The polypeptide is Adenosylmethionine-8-amino-7-oxononanoate aminotransferase (Corynebacterium glutamicum (strain ATCC 13032 / DSM 20300 / JCM 1318 / BCRC 11384 / CCUG 27702 / LMG 3730 / NBRC 12168 / NCIMB 10025 / NRRL B-2784 / 534)).